We begin with the raw amino-acid sequence, 491 residues long: Proline-rich protein PRCC (491 aa).

Positions 1-100 are mediates interaction with MAD2L2; the sequence is MSLVAYASSD…PPPPGVSPAE (100 aa). Disordered stretches follow at residues 1–244, 260–313, and 432–454; these read MSLV…SPSA, ITQE…PAFQ, and EEKT…QRRK. Residues 10 to 26 show a composition bias toward acidic residues; it reads DESEPDEAEPEPEEEEA. Residues 40–49 show a composition bias toward low complexity; that stretch reads ASLPAPKGPA. The span at 50–96 shows a compositional bias: pro residues; it reads LLPPPPQMLAPAFPPPLLLPPPTGDPRLQPPPPLPFGLGGFPPPPGV. Residues S97, S114, S157, S159, S212, and S218 each carry the phosphoserine modification. Residues 111 to 120 are compositionally biased toward low complexity; it reads GLPSPRGPGL. Residues 230–244 are compositionally biased toward low complexity; the sequence is APVVGTTTTTPSPSA. The residue at position 239 (T239) is a Phosphothreonine. Residues S241 and S267 each carry the phosphoserine modification. Residues 262 to 272 show a composition bias toward acidic residues; the sequence is QEEDDSDEEVA. Residues 287-307 are compositionally biased toward pro residues; the sequence is GVEPYPYPIPTVPEELPPGTE.

Interacts with MAD2L2; the interaction is direct. As to expression, ubiquitous in fetal and adult tissues.

The protein resides in the nucleus. In terms of biological role, may regulate cell cycle progression through interaction with MAD2L2. The protein is Proline-rich protein PRCC (PRCC) of Homo sapiens (Human).